The sequence spans 273 residues: Cilia- and flagella-associated protein 298-B (273 aa).

This sequence belongs to the CFAP298 family.

The protein resides in the cytoplasm. Its subcellular location is the cytoskeleton. It localises to the cilium basal body. Its function is as follows. Plays a role in motile cilium function, possibly by acting on outer dynein arm assembly. Seems to be important for initiation rather than maintenance of cilium motility. Required for correct positioning of the cilium at the apical cell surface, suggesting an additional role in the planar cell polarity (PCP) pathway. May suppress canonical Wnt signaling activity. The chain is Cilia- and flagella-associated protein 298-B (cfap298-b) from Xenopus laevis (African clawed frog).